A 96-amino-acid polypeptide reads, in one-letter code: Cytochrome c-553 (96 aa).

The first 19 residues, 1-19 (MKKVIVALGVLAFANVLMA), serve as a signal peptide directing secretion. The heme c site is built by C29, C32, H33, and M73.

The protein belongs to the cytochrome c family. In terms of processing, binds 1 heme c group covalently per subunit.

It is found in the periplasm. Functionally, natural electron acceptor for a formate dehydrogenase. The protein is Cytochrome c-553 of Helicobacter pylori (strain J99 / ATCC 700824) (Campylobacter pylori J99).